A 306-amino-acid polypeptide reads, in one-letter code: Serine/threonine-protein kinase mug51 (306 aa).

This sequence belongs to the STK19 family.

The catalysed reaction is L-seryl-[protein] + ATP = O-phospho-L-seryl-[protein] + ADP + H(+). The enzyme catalyses L-threonyl-[protein] + ATP = O-phospho-L-threonyl-[protein] + ADP + H(+). In terms of biological role, serine/threonine-protein kinase. Has a role in meiosis. This chain is Serine/threonine-protein kinase mug51 (mug51), found in Schizosaccharomyces pombe (strain 972 / ATCC 24843) (Fission yeast).